Reading from the N-terminus, the 496-residue chain is Fascin (496 aa).

This sequence belongs to the fascin family.

The protein localises to the cytoplasm. Its subcellular location is the cytoskeleton. Acts as an actin bundling protein. The sequence is that of Fascin from Strongylocentrotus purpuratus (Purple sea urchin).